Here is a 78-residue protein sequence, read N- to C-terminus: Large ribosomal subunit protein bL28 (78 aa).

The protein belongs to the bacterial ribosomal protein bL28 family.

The polypeptide is Large ribosomal subunit protein bL28 (Pseudoalteromonas atlantica (strain T6c / ATCC BAA-1087)).